Consider the following 79-residue polypeptide: Sigma-O factor regulatory protein RsoA (79 aa).

Its function is as follows. Together with RNA polymerase sigma factor SigO, positively regulates the expression of at least three operons, including oxdC-yvrL, sigO-rsoA and yvrJ. Required for the acid stress-dependent induction of the oxalate decarboxylase oxdC. The sequence is that of Sigma-O factor regulatory protein RsoA (rsoA) from Bacillus subtilis (strain 168).